Here is a 1254-residue protein sequence, read N- to C-terminus: Histone-lysine N-methyltransferase eggless (1254 aa).

Disordered regions lie at residues 24–209 and 228–248; these read ALVE…EIPR and PVPR…SKTT. Basic and acidic residues-rich tracts occupy residues 40–57 and 65–81; these read TPEK…KDLT and KSQE…KDPE. Positions 112 to 125 are enriched in low complexity; that stretch reads SVELLESPLKSPSS. Basic and acidic residues predominate over residues 136–162; the sequence is LEEKEKPGPAKELEPKESEPDSKESSK. Residues 172 to 181 show a composition bias toward polar residues; the sequence is ELISSPTSDD. Composition is skewed to basic and acidic residues over residues 182–197 and 234–243; these read SLAK…EHGQ and AMQESKETQK. The stretch at 391 to 416 forms a coiled coil; that stretch reads TILQAKIERLAKKFEEVDLQLAQVQG. Tudor domains follow at residues 535–607 and 634–691; these read RLPI…SEKV and QCTK…KETQ. The tract at residues 734–760 is disordered; it reads ARKSTSKSGSPASTAAPPTGSSSSSAV. Low complexity predominate over residues 739–759; that stretch reads SKSGSPASTAAPPTGSSSSSA. Positions 811 to 877 constitute an MBD domain; the sequence is LDSYSPLSKP…DNFDFTPDLR (67 aa). A Pre-SET domain is found at 939 to 1011; the sequence is VCCDCEDDCS…NCLNRVVQHS (73 aa). Zn(2+) contacts are provided by cysteine 941, cysteine 943, cysteine 947, cysteine 953, cysteine 955, cysteine 993, cysteine 997, cysteine 999, and cysteine 1003. The region spanning 1014 to 1229 is the SET domain; sequence MKLQVFKTSN…SGTELTWNYN (216 aa). Residues 1024-1026, aspartate 1062, and tyrosine 1064 each bind S-adenosyl-L-methionine; that span reads RGW. A compositionally biased stretch (basic and acidic residues) spans 1081–1090; that stretch reads YESDVERADL. The tract at residues 1081 to 1139 is disordered; the sequence is YESDVERADLDHEDDNYGPDAEDDDDFRPNNYYQKKKEKLRSSRSNSSSTQNTELDSQE. Over residues 1091–1106 the composition is skewed to acidic residues; sequence DHEDDNYGPDAEDDDD. Residues 1123–1134 are compositionally biased toward low complexity; sequence SRSNSSSTQNTE. S-adenosyl-L-methionine is bound by residues arginine 1183 and 1186 to 1187; that span reads NH. The Zn(2+) site is built by cysteine 1189, cysteine 1242, cysteine 1244, and cysteine 1249. Residues 1238-1254 form the Post-SET domain; it reads KVLYCQCGAQNCRVRLL.

This sequence belongs to the class V-like SAM-binding methyltransferase superfamily. Histone-lysine methyltransferase family. Suvar3-9 subfamily.

It is found in the nucleus. Its subcellular location is the chromosome. The enzyme catalyses L-lysyl(9)-[histone H3] + 3 S-adenosyl-L-methionine = N(6),N(6),N(6)-trimethyl-L-lysyl(9)-[histone H3] + 3 S-adenosyl-L-homocysteine + 3 H(+). In terms of biological role, histone methyltransferase that specifically trimethylates 'Lys-9' of histone H3 in ovary. H3 'Lys-9' trimethylation represents a specific tag for epigenetic transcriptional repression by recruiting Su(var)205/HP1 to methylated histones. Plays a central role during oogenesis. The sequence is that of Histone-lysine N-methyltransferase eggless (egg) from Drosophila pseudoobscura pseudoobscura (Fruit fly).